A 277-amino-acid chain; its full sequence is Proteasome subunit beta type-7 (277 aa).

A propeptide spans 1 to 43 (MAAVSVFQPPVGGFSFDNCRRNAVLEADFAKKGFKLPKARKTG) (removed in mature form). The Nucleophile role is filled by threonine 44.

The protein belongs to the peptidase T1B family. The 26S proteasome consists of a 20S proteasome core and two 19S regulatory subunits. The 20S proteasome core is a barrel-shaped complex made of 28 subunits that are arranged in four stacked rings. The two outer rings are each formed by seven alpha subunits, and the two inner rings are formed by seven beta subunits. The proteolytic activity is exerted by three beta-subunits PSMB5, PSMB6 and PSMB7.

The protein resides in the cytoplasm. Its subcellular location is the nucleus. It catalyses the reaction Cleavage of peptide bonds with very broad specificity.. In terms of biological role, component of the 20S core proteasome complex involved in the proteolytic degradation of most intracellular proteins. This complex plays numerous essential roles within the cell by associating with different regulatory particles. Associated with two 19S regulatory particles, forms the 26S proteasome and thus participates in the ATP-dependent degradation of ubiquitinated proteins. The 26S proteasome plays a key role in the maintenance of protein homeostasis by removing misfolded or damaged proteins that could impair cellular functions, and by removing proteins whose functions are no longer required. Associated with the PA200 or PA28, the 20S proteasome mediates ubiquitin-independent protein degradation. This type of proteolysis is required in several pathways including spermatogenesis (20S-PA200 complex) or generation of a subset of MHC class I-presented antigenic peptides (20S-PA28 complex). Within the 20S core complex, PSMB7 displays a trypsin-like activity. This Mus musculus (Mouse) protein is Proteasome subunit beta type-7 (Psmb7).